The following is a 507-amino-acid chain: Flagellar hook-associated protein 1 (507 aa).

Belongs to the flagella basal body rod proteins family.

Its subcellular location is the secreted. It localises to the bacterial flagellum. This chain is Flagellar hook-associated protein 1 (flgK), found in Bacillus subtilis (strain 168).